The chain runs to 124 residues: PEP-dependent dihydroxyacetone kinase 1, phosphoryl donor subunit DhaM (124 aa).

A PTS EIIA type-4 domain is found at 4–124 (PYGVVIISHS…AANLKTIEIK (121 aa)). H12 functions as the Tele-phosphohistidine intermediate in the catalytic mechanism.

The protein belongs to the PEP-utilizing enzyme family. As to quaternary structure, homodimer. The dihydroxyacetone kinase complex is composed of a homodimer of DhaM, a homodimer of DhaK and the subunit DhaL.

It is found in the cytoplasm. The enzyme catalyses dihydroxyacetone + phosphoenolpyruvate = dihydroxyacetone phosphate + pyruvate. Its function is as follows. Component of the dihydroxyacetone kinase complex, which is responsible for the phosphoenolpyruvate (PEP)-dependent phosphorylation of dihydroxyacetone. DhaM serves as the phosphoryl donor. Is phosphorylated by phosphoenolpyruvate in an EI- and HPr-dependent reaction, and a phosphorelay system on histidine residues finally leads to phosphoryl transfer to DhaL and dihydroxyacetone. The protein is PEP-dependent dihydroxyacetone kinase 1, phosphoryl donor subunit DhaM of Listeria innocua serovar 6a (strain ATCC BAA-680 / CLIP 11262).